The following is a 203-amino-acid chain: Ribosomal RNA large subunit methyltransferase E (203 aa).

S-adenosyl-L-methionine contacts are provided by glycine 51, tryptophan 53, aspartate 69, aspartate 85, and aspartate 108. Catalysis depends on lysine 148, which acts as the Proton acceptor.

Belongs to the class I-like SAM-binding methyltransferase superfamily. RNA methyltransferase RlmE family.

It is found in the cytoplasm. It catalyses the reaction uridine(2552) in 23S rRNA + S-adenosyl-L-methionine = 2'-O-methyluridine(2552) in 23S rRNA + S-adenosyl-L-homocysteine + H(+). Functionally, specifically methylates the uridine in position 2552 of 23S rRNA at the 2'-O position of the ribose in the fully assembled 50S ribosomal subunit. This Methanosphaerula palustris (strain ATCC BAA-1556 / DSM 19958 / E1-9c) protein is Ribosomal RNA large subunit methyltransferase E.